Consider the following 504-residue polypeptide: ATP-dependent rRNA helicase RRP3 (504 aa).

Low complexity predominate over residues 34-62 (ASASSAASTKESLPVSETISISTSETPVS). Residues 34 to 99 (ASASSAASTK…SSSSPPSVQS (66 aa)) are disordered. A compositionally biased stretch (basic and acidic residues) spans 68–79 (SNKEDLSTKKDQ). Residues 80–99 (SSASSSSSTSSSSSPPSVQS) show a composition bias toward low complexity. The short motif at 98-126 (QSFTEFDLVPELLESIQSLKYTQPTPIQA) is the Q motif element. The region spanning 129–301 (IPHALQGKDI…RSLNSPVQVE (173 aa)) is the Helicase ATP-binding domain. 142-149 (AETGSGKT) lines the ATP pocket. Residues 248–251 (DEVD) carry the DEAD box motif. Positions 327–471 (RLIQIVNLDS…DLPLDEMQGL (145 aa)) constitute a Helicase C-terminal domain.

This sequence belongs to the DEAD box helicase family. DDX47/RRP3 subfamily. In terms of assembly, interacts with the SSU processome.

It is found in the nucleus. The catalysed reaction is ATP + H2O = ADP + phosphate + H(+). Functionally, ATP-dependent rRNA helicase required for pre-ribosomal RNA processing. Involved in the maturation of the 35S-pre-rRNA and to its cleavage to mature 18S rRNA. The polypeptide is ATP-dependent rRNA helicase RRP3 (Lodderomyces elongisporus (strain ATCC 11503 / CBS 2605 / JCM 1781 / NBRC 1676 / NRRL YB-4239) (Yeast)).